A 176-amino-acid polypeptide reads, in one-letter code: Ribosome rescue factor SmrB (176 aa).

The Smr domain maps to L97–D172.

It belongs to the SmrB family. Associates with collided ribosomes, but not with correctly translating polysomes.

In terms of biological role, acts as a ribosome collision sensor. Detects stalled/collided disomes (pairs of ribosomes where the leading ribosome is stalled and a second ribosome has collided with it) and endonucleolytically cleaves mRNA at the 5' boundary of the stalled ribosome. Stalled/collided disomes form a new interface (primarily via the 30S subunits) that binds SmrB. Cleaved mRNA becomes available for tmRNA ligation, leading to ribosomal subunit dissociation and rescue of stalled ribosomes. This is Ribosome rescue factor SmrB from Photobacterium profundum (strain SS9).